A 562-amino-acid chain; its full sequence is Protein wntless (562 aa).

Residues 1–13 (MSGTILENLSGRK) lie on the Cytoplasmic side of the membrane. A helical transmembrane segment spans residues 14–34 (LSILVASLLLCQVFCFLLGGL). The Lumenal segment spans residues 35–239 (YAPLPAGHVT…AIHQNGGFTQ (205 aa)). An N-linked (GlcNAc...) asparagine glycan is attached at Asn58. Residues 240 to 260 (IWLMLKTVLFPFVVGIMIWFW) form a helical membrane-spanning segment. The Cytoplasmic segment spans residues 261–270 (RRVHLLQRSP). Residues 271-291 (ALLEYMLIYLGGALTFLNLPL) form a helical membrane-spanning segment. Residues 292–311 (EYLSLVVEMPYMLLLSDIRQ) lie on the Lumenal side of the membrane. A helical transmembrane segment spans residues 312-332 (GIFYAMLLSFWLVFAGEHMLI). Residues 333-344 (QDAPNKSTIRSR) are Cytoplasmic-facing. The helical transmembrane segment at 345-365 (YWKHLSAVVVGCISLFVFDIC) threads the bilayer. Residues 366 to 390 (ERGVQLRNPFYSIWTTPLGAKVAMT) are Lumenal-facing. A helical transmembrane segment spans residues 391-411 (FIILAGVSAAIYFLFLCYMIW). Over 412–441 (KVFRNIGDKRTSLPSMSQARRLHYEGLIYR) the chain is Cytoplasmic. A helical transmembrane segment spans residues 442 to 462 (FKFLMLATLLCAALTVAGFIM). Topologically, residues 463–482 (GQMAEGQWQWNDNVEIQLTS) are lumenal. The chain crosses the membrane as a helical span at residues 483–503 (AFLTGVYGMWNIYIFALLILY). The Cytoplasmic segment spans residues 504-562 (APSHKQWPTMHHSDETTQSNENIVASAASEEIEFSHLPSDSNPSEISSLTSFTRKVAFD). A disordered region spans residues 539-562 (HLPSDSNPSEISSLTSFTRKVAFD). Over residues 541–556 (PSDSNPSEISSLTSFT) the composition is skewed to polar residues.

The protein belongs to the wntless family. Interacts with wg; in the Golgi. Interacts with Vps35, a component of the retromer complex; wls stability is regulated by Vps35.

The protein resides in the presynaptic cell membrane. It is found in the postsynaptic cell membrane. Its subcellular location is the cell membrane. It localises to the endoplasmic reticulum membrane. The protein localises to the endosome membrane. The protein resides in the golgi apparatus membrane. In terms of biological role, a segment polarity gene required for wingless (wg)-dependent patterning processes, acting in both wg-sending cells and wg-target cells. In non-neuronal cells wls directs wg secretion. The wls traffic loop encompasses the Golgi, the cell surface, an endocytic compartment and a retrograde route leading back to the Golgi, and involves clathrin-mediated endocytosis and the retromer complex (a conserved protein complex consisting of Vps35 and Vps26). In neuronal cells (the larval motorneuron NMJ), the wg signal moves across the synapse via the release of wls-containing exosome-like vesicles. Postsynaptic wls is required for the trafficking of fz2 through the fz2-interacting protein Grip. This chain is Protein wntless, found in Drosophila ananassae (Fruit fly).